We begin with the raw amino-acid sequence, 626 residues long: MHYPKVYDVIVIGGGHAGTEAALAAARMGRQTLLLTHNIETLGQMSCNPAIGGIGKSHLVREIDALGGAMALAADKGGIQFRILNSRKGAAVRATRAQADRVRYKAAIRETLENQANLDIFQQAADDLIVEGDTVKGVVTQMGIRFDAKTVVLTTGTFLGGVIHVGLEKSSGGRAGDPPSIALAQRLRELKLPVGRLKTGTPPRIDARSVDFSVMTPQPGDFPSPVMSFMGDVSMHPEQVNCYITHTNEKTHDIIRGGLDRSPMYTGVIEGVGPRYCPSIEDKIHRFSDKDSHQVFLEPEGLDTHELYPNGISTSLPFDVQFELVRSIRGMENAHILRPGYAIEYDYFNPQALKFTLETKAINGLYFAGQINGTTGYEEAGAQGLLAGLNAARRAWEQEEWTPKRDQAYMGVLVDDLITLGTKEPYRMFTSRAEYRLMLREDNADQRLTTIGRELGLVDDVRWAAYCEKMEAVERETSRLQHLWAAPNNPMGKKFVEMTGADLSKECSAIDLLKRPNINFSQIAELTGSEVSQQVGEQIEIAVKYEGYINRQHEDVAQLKRLEETKIPADFDYDVVSGLSREITQKLKTVRPETLAQASRIPGVTPAAVQLVMITIRKNNMTKKTA.

13–18 (GGGHAG) contributes to the FAD binding site. 273–287 (GPRYCPSIEDKIHRF) is a binding site for NAD(+).

Belongs to the MnmG family. As to quaternary structure, homodimer. Heterotetramer of two MnmE and two MnmG subunits. FAD serves as cofactor.

The protein localises to the cytoplasm. Its function is as follows. NAD-binding protein involved in the addition of a carboxymethylaminomethyl (cmnm) group at the wobble position (U34) of certain tRNAs, forming tRNA-cmnm(5)s(2)U34. The polypeptide is tRNA uridine 5-carboxymethylaminomethyl modification enzyme MnmG (Acinetobacter baumannii (strain ATCC 17978 / DSM 105126 / CIP 53.77 / LMG 1025 / NCDC KC755 / 5377)).